Consider the following 130-residue polypeptide: Small ribosomal subunit protein uS11 (130 aa).

The protein belongs to the universal ribosomal protein uS11 family. As to quaternary structure, part of the 30S ribosomal subunit. Interacts with proteins S7 and S18. Binds to IF-3.

Functionally, located on the platform of the 30S subunit, it bridges several disparate RNA helices of the 16S rRNA. Forms part of the Shine-Dalgarno cleft in the 70S ribosome. The sequence is that of Small ribosomal subunit protein uS11 from Tropheryma whipplei (strain TW08/27) (Whipple's bacillus).